Reading from the N-terminus, the 585-residue chain is Glutamate decarboxylase (585 aa).

The segment covering lysine 35 to methionine 56 has biased composition (polar residues). The segment at lysine 35–tyrosine 60 is disordered. Lysine 318 carries the N6-(pyridoxal phosphate)lysine modification.

It belongs to the group II decarboxylase family. Pyridoxal 5'-phosphate serves as cofactor.

The catalysed reaction is L-glutamate + H(+) = 4-aminobutanoate + CO2. The sequence is that of Glutamate decarboxylase (GAD1) from Saccharomyces cerevisiae (strain ATCC 204508 / S288c) (Baker's yeast).